The primary structure comprises 524 residues: Keratin, type II cytoskeletal 72 (524 aa).

The tract at residues Met1–Gln136 is head. The segment at Glu137–Leu172 is coil 1A. Residues Glu137 to Met450 enclose the IF rod domain. Residues Gln173–Tyr191 are linker 1. Residues Thr192 to Leu283 are coil 1B. The tract at residues Gln284 to Ile307 is linker 12. A coil 2 region spans residues Ile308–Glu446. A tail region spans residues Glu447–Arg524. The segment at Lys495–Arg524 is disordered.

Belongs to the intermediate filament family. In terms of assembly, heterotetramer of two type I and two type II keratins.

Functionally, has a role in hair formation. Specific component of keratin intermediate filaments in the inner root sheath (IRS) of the hair follicle. The polypeptide is Keratin, type II cytoskeletal 72 (KRT72) (Bos taurus (Bovine)).